Here is a 136-residue protein sequence, read N- to C-terminus: Small ribosomal subunit protein uS11c (136 aa).

Belongs to the universal ribosomal protein uS11 family. Part of the 30S ribosomal subunit.

The protein localises to the plastid. It localises to the chloroplast. In Helianthus annuus (Common sunflower), this protein is Small ribosomal subunit protein uS11c.